A 384-amino-acid polypeptide reads, in one-letter code: DNA dC-&gt;dU-editing enzyme APOBEC-3G (384 aa).

The segment at 1–60 is essential for cytoplasmic localization; sequence MKPHFRNPVERMYQDTFSDNFYNRPILSRRNTVWLCYEVKTKGPSRPPLDAKIFRGQVYS. CMP/dCMP-type deaminase domains lie at 29-138 and 214-328; these read RRNT…LRSL and GRHE…LRTL. The residue at position 32 (T32) is a Phosphothreonine; by PKA. The Zn(2+) site is built by H65, C97, and C100. The necessary for homooligomerization stretch occupies residues 209 to 336; it reads ELWVRGRHET…TLAKAGAEIS (128 aa). Residues 213–215 form an interaction with DNA region; it reads RGR. T218 bears the Phosphothreonine; by PKA and CAMK2 mark. H257 contributes to the Zn(2+) binding site. Catalysis depends on E259, which acts as the Proton donor. The Zn(2+) site is built by C288 and C291. The tract at residues 313–320 is interaction with DNA; it reads RIYDDQGR.

Belongs to the cytidine and deoxycytidylate deaminase family. In terms of assembly, homodimer. Homooligomer. Can bind RNA to form ribonucleoprotein complexes of high-molecular-mass (HMM) or low-molecular-mass (LMM). HMM is inactive and heterogeneous in protein composition because of binding nonselectively to cellular RNAs, which in turn are associated with variety of cellular proteins. The LMM form which is enzymatically active has few or no RNAs associated. Its ability to form homooligomer is distinct from its ability to assemble into HMM. Interacts with APOBEC3B, APOBEC3F, MOV10, AGO2, EIF4E, EIF4ENIF1, DCP2 and DDX6 in an RNA-dependent manner. Interacts with AGO1, AGO3 and PKA/PRKACA. Zn(2+) is required as a cofactor.

Its subcellular location is the cytoplasm. The protein localises to the nucleus. The protein resides in the P-body. The catalysed reaction is a 2'-deoxycytidine in single-stranded DNA + H2O + H(+) = a 2'-deoxyuridine in single-stranded DNA + NH4(+). DNA deaminase (cytidine deaminase) which acts as an inhibitor of retrovirus replication and retrotransposon mobility via deaminase-dependent and -independent mechanisms. After the penetration of retroviral nucleocapsids into target cells of infection and the initiation of reverse transcription, it can induce the conversion of cytosine to uracil in the minus-sense single-strand viral DNA, leading to G-to-A hypermutations in the subsequent plus-strand viral DNA. The resultant detrimental levels of mutations in the proviral genome, along with a deamination-independent mechanism that works prior to the proviral integration, together exert efficient antiretroviral effects in infected target cells. Selectively targets single-stranded DNA and does not deaminate double-stranded DNA or single- or double-stranded RNA. May inhibit the mobility of LTR retrotransposons. The polypeptide is DNA dC-&gt;dU-editing enzyme APOBEC-3G (APOBEC3G) (Pan paniscus (Pygmy chimpanzee)).